A 444-amino-acid polypeptide reads, in one-letter code: Prenyltransferase phnF (444 aa).

Belongs to the tryptophan dimethylallyltransferase family.

It carries out the reaction 2,3,4,7,9-pentahydroxy-6-methyl-1H-phenalen-1-one + dimethylallyl diphosphate = 2,4,7,9-tetrahydroxy-6-methyl-8-(2-methylbut-3-en-2-yl)-1-oxo-1H-phenalen-3-ol + diphosphate. The protein operates within secondary metabolite biosynthesis. Prenyltransferase; part of the gene cluster that mediates the biosynthesis of phenalenones such as herqueinone, compounds that have been reported to treat tumors, bacterial infections and/or mycoses, and rheumatic diseases. The non-reducing polyketide synthase phnA synthesizes the heptaketide backbone and cyclizes it into the angular, hemiketal-containing naphtho-gamma-pyrone prephenalenone. The product template (PT) domain of phnA catalyzes only the C4-C9 aldol condensation, which is unprecedented among known PT domains. The transformation of prephenalenone to phenalenones requires an FAD-dependent monooxygenase phnB, which catalyzes the C2 aromatic hydroxylation of prephenalenone and ring opening of the gamma-pyrone ring simultaneously. Subsequent intramolecular deprotonation of C3 phenolic oxygen accelerates phenalenone ring closure to yield the tricyclic phenalenone core with a C2 hydroxylation. The prenyltransferase phnF further catalyzes reverse C-prenylation of phenalenone by direct electrophilic substitution at C6, or possibly via first a forward O-prenylation of a neighboring phenol in phenalenone, followed by a Claisen rearrangement. The hydroalkoxylation enzyme phnH catalyzes the 5-exo-trig cyclization via acid catalysis after the spontaneous deprotonation of 7-OH, which leads to the formation of the dihydrobenzofuran atrovenetin. Atrovenetin is further converted to deoxyherqueinone by the O-methyltransferase phnC which can methylate C2-OH to stabilize the northern portion of the phenalenone core. Finally, the oxidoreductase phnG converts deoxyherqueinone to herqueinone via C6 hydroxylation. This is Prenyltransferase phnF from Penicillium herquei.